Reading from the N-terminus, the 254-residue chain is Proteasome subunit alpha (254 aa).

The disordered stretch occupies residues 234 to 254 (EEMLPTPAATEDAPANGDAPS).

The protein belongs to the peptidase T1A family. As to quaternary structure, the 20S proteasome core is composed of 14 alpha and 14 beta subunits that assemble into four stacked heptameric rings, resulting in a barrel-shaped structure. The two inner rings, each composed of seven catalytic beta subunits, are sandwiched by two outer rings, each composed of seven alpha subunits. The catalytic chamber with the active sites is on the inside of the barrel. Has a gated structure, the ends of the cylinder being occluded by the N-termini of the alpha-subunits. Is capped by the proteasome-associated ATPase, ARC.

The protein localises to the cytoplasm. The protein operates within protein degradation; proteasomal Pup-dependent pathway. With respect to regulation, the formation of the proteasomal ATPase ARC-20S proteasome complex, likely via the docking of the C-termini of ARC into the intersubunit pockets in the alpha-rings, may trigger opening of the gate for substrate entry. Interconversion between the open-gate and close-gate conformations leads to a dynamic regulation of the 20S proteasome proteolysis activity. In terms of biological role, component of the proteasome core, a large protease complex with broad specificity involved in protein degradation. This is Proteasome subunit alpha from Rhodococcus erythropolis (strain PR4 / NBRC 100887).